Reading from the N-terminus, the 97-residue chain is NADH dehydrogenase [ubiquinone] 1 alpha subcomplex subunit 2 (97 aa).

C19 and C53 form a disulfide bridge.

The protein belongs to the complex I NDUFA2 subunit family. In terms of assembly, complex I is composed of at least 49 different subunits.

It localises to the mitochondrion inner membrane. In terms of biological role, accessory subunit of the mitochondrial membrane respiratory chain NADH dehydrogenase (Complex I), that is believed not to be involved in catalysis. Complex I functions in the transfer of electrons from NADH to the respiratory chain. The immediate electron acceptor for the enzyme is believed to be ubiquinone. This is NADH dehydrogenase [ubiquinone] 1 alpha subcomplex subunit 2 from Arabidopsis thaliana (Mouse-ear cress).